The primary structure comprises 363 residues: Protein RecA (363 aa).

79–86 (GPESSGKT) provides a ligand contact to ATP.

The protein belongs to the RecA family.

It localises to the cytoplasm. Its function is as follows. Can catalyze the hydrolysis of ATP in the presence of single-stranded DNA, the ATP-dependent uptake of single-stranded DNA by duplex DNA, and the ATP-dependent hybridization of homologous single-stranded DNAs. It interacts with LexA causing its activation and leading to its autocatalytic cleavage. This chain is Protein RecA, found in Borrelia duttonii (strain Ly).